We begin with the raw amino-acid sequence, 155 residues long: Glycosylation-dependent cell adhesion molecule 1 (155 aa).

The signal sequence occupies residues 1–18; the sequence is MKFFAVLLLASLAATSLA. T34 is a glycosylation site (O-linked (GalNAc...) threonine). A phosphoserine mark is found at S48, S53, S57, S59, and S65. Residues 74–109 are disordered; it reads ARRHQNQNPKLLHPVPQESSFRNTATQSEETKELTP. Over residues 90 to 101 the composition is skewed to polar residues; it reads QESSFRNTATQS.

It belongs to the PP3/GlyCAM-1 family. In terms of tissue distribution, highly expressed in whey fraction of camel milk.

This is Glycosylation-dependent cell adhesion molecule 1 (GLYCAM1) from Camelus dromedarius (Dromedary).